Consider the following 88-residue polypeptide: U-scoloptoxin(XY)-Er1a (88 aa).

Positions 1–24 (MASQVVLSFALVVVLAVFVGQVDS) are cleaved as a signal peptide. The segment at 66–88 (RPELSPGAWDDSSEEKDNEASLA) is disordered. A propeptide spanning residues 79–88 (EEKDNEASLA) is cleaved from the precursor.

This sequence belongs to the scoloptoxin-XY family. Post-translationally, contains 3 disulfide bonds. As to expression, expressed by the venom gland.

Its subcellular location is the secreted. The protein is U-scoloptoxin(XY)-Er1a of Ethmostigmus rubripes (Giant centipede).